We begin with the raw amino-acid sequence, 148 residues long: Small ribosomal subunit protein uS9 (148 aa).

The protein belongs to the universal ribosomal protein uS9 family.

This Aedes aegypti (Yellowfever mosquito) protein is Small ribosomal subunit protein uS9 (RpS16).